The chain runs to 711 residues: Polyribonucleotide nucleotidyltransferase (711 aa).

Mg(2+)-binding residues include D494 and D500. The region spanning 560-620 is the KH domain; sequence PKIEIFGVDP…INVENAKSDI (61 aa). Residues 651-710 form the S1 motif domain; the sequence is GEEFDGVVKKIMDFGAFISLKDGIDGLLHVSKIKTQLSEGDTLRVKVEEIKRGKISLELC.

It belongs to the polyribonucleotide nucleotidyltransferase family. Requires Mg(2+) as cofactor.

It localises to the cytoplasm. It catalyses the reaction RNA(n+1) + phosphate = RNA(n) + a ribonucleoside 5'-diphosphate. Functionally, involved in mRNA degradation. Catalyzes the phosphorolysis of single-stranded polyribonucleotides processively in the 3'- to 5'-direction. The chain is Polyribonucleotide nucleotidyltransferase from Campylobacter hominis (strain ATCC BAA-381 / DSM 21671 / CCUG 45161 / LMG 19568 / NCTC 13146 / CH001A).